A 771-amino-acid polypeptide reads, in one-letter code: MKKQRLVLAGNGMAGIRCIEEVLKLNRHMFEIVIFGSEPHPNYNRILLSSVLQGEASLDDITLNSKDWYDKHGITLYTGETVIQIDTDQQQVITDRKRTLSYDKLIVATGSSPHILPIPGADKKGVYGFRTIEDCQALMNMAQHFQKAAVIGAGLLGLEAAVGLQHLGMDVSVIHHSAGIMQKQLDQTAARLLQTELEQKGLTFLLEKDTVSISGATKADRIHFKDGSSLKADLIVMAAGVKPNIELAVSAGIKVNRGIIVNDFMQTSEPNIYAVGECAEHNGTVYGLVAPLYEQGKALASHICGVPCEEYQGSAPSAALKIAGIDVWSAGKIQEDERTTSIKIYDEQAGVYKKALFVDDKLAGVILFGDTRDKQRLLDSLLKQRDISIAKKQIIEPETSGPLFESMPSSETICQCNTVTKGAIEDAVHTNSLTTVEEVKHCTKATGSCGGCKPLVEDLLRYMTNSEYTKPASTPSFCSCTDFTEDDIIAELQRRPFTNPAEVMNQLDWKTKNGCSTCVPAIQYYLEMLYPGFVQPEPATEETCILIPQMYGGRTNAEQLRTIANIIEAYSIPDVSITHGQRLKLSGIKPADLPNMKKDLKMPVYTNEHRHALQSIKACTCGQNRSIQQLAAQIERQLEMLPLPAPISISLSCETDCTEAALQDVGAIRTQAGWDIHIGGVRGTHARSGALFCVTENEDSTAGMIKGLIQYYRETAHYLEGVHQWIDRLGIVHIREVLFEEDLRAQLLESLQTDLSLIQNPTVETGAYKKG.

An FAD-binding site is contributed by 43 to 79 (YNRILLSSVLQGEASLDDITLNSKDWYDKHGITLYTG). [2Fe-2S] cluster-binding residues include Cys-414, Cys-416, Cys-449, and Cys-452.

FAD serves as cofactor. Requires [2Fe-2S] cluster as cofactor.

Required for nitrate assimilation. In Bacillus subtilis (strain 168), this protein is Assimilatory nitrate reductase electron transfer subunit (nasB).